The following is a 134-amino-acid chain: Small ribosomal subunit protein uS9 (134 aa).

Positions 109–134 are disordered; sequence DARRTEPHKPSKSSKGPRAKRQKSYR. The span at 118–134 shows a compositional bias: basic residues; it reads PSKSSKGPRAKRQKSYR.

Belongs to the universal ribosomal protein uS9 family.

This Methanococcus maripaludis (strain C5 / ATCC BAA-1333) protein is Small ribosomal subunit protein uS9.